Reading from the N-terminus, the 488-residue chain is Dihydrolipoyl dehydrogenase, mitochondrial (488 aa).

A mitochondrion-targeting transit peptide spans 1–25 (MLRINRISNLRTFGQRFFSTEQQDV). FAD contacts are provided by residues 52–61 (EKRGKLGGTC), lysine 70, glycine 134, and 163–165 (TGS). An intrachain disulfide couples cysteine 61 to cysteine 66. NAD(+) contacts are provided by residues 200-207 (GGGVIGLE), glutamate 223, valine 257, and glycine 294. Residues aspartate 335 and 341 to 344 (MLAH) each bind FAD. The active-site Proton acceptor is the histidine 467.

The protein belongs to the class-I pyridine nucleotide-disulfide oxidoreductase family. FAD serves as cofactor.

Its subcellular location is the mitochondrion matrix. It carries out the reaction N(6)-[(R)-dihydrolipoyl]-L-lysyl-[protein] + NAD(+) = N(6)-[(R)-lipoyl]-L-lysyl-[protein] + NADH + H(+). This is Dihydrolipoyl dehydrogenase, mitochondrial (lpd) from Dictyostelium discoideum (Social amoeba).